A 176-amino-acid chain; its full sequence is Small ribosomal subunit protein uS5 (176 aa).

Positions L11 to V74 constitute an S5 DRBM domain.

This sequence belongs to the universal ribosomal protein uS5 family. Part of the 30S ribosomal subunit. Contacts proteins S4 and S8.

In terms of biological role, with S4 and S12 plays an important role in translational accuracy. Located at the back of the 30S subunit body where it stabilizes the conformation of the head with respect to the body. This is Small ribosomal subunit protein uS5 from Rickettsia bellii (strain RML369-C).